Consider the following 57-residue polypeptide: MEKNRTNIFSVYLMITFLLISIFITMVMSDGEATIINAPNRCPPGHVVVKGRCRIAG.

An N-terminal signal peptide occupies residues 1–29 (MEKNRTNIFSVYLMITFLLISIFITMVMS). Residues 30-33 (DGEA) constitute a propeptide that is removed on maturation. C42 and C53 are oxidised to a cystine. A56 carries the post-translational modification Alanine amide.

O-glycosylated. Expressed by the venom gland.

The protein localises to the secreted. Its function is as follows. Serine protease inhibitor which exhibits antifibrinolytic, antielastolytic and antimicrobial activities. Displays antimicrobial activity against bacteria and fungi. Likely functions in the innate immune response to microbial infection and possibly in the venom, as an antifibrinolytic agent. This is U17-myrmicitoxin-Tb1a from Tetramorium bicarinatum (Tramp ant).